An 839-amino-acid chain; its full sequence is Putative AC9 transposase (839 aa).

The segment covering 32 to 43 (SSSNANGTATDP) has biased composition (polar residues). The disordered stretch occupies residues 32-85 (SSSNANGTATDPSQDDMAIVHEPQPQPQPQPEPQPQPQPEPEEEAPQKRAKKCT). The span at 55-70 (QPQPQPQPEPQPQPQP) shows a compositional bias: pro residues.

The sequence is that of Putative AC9 transposase from Zea mays (Maize).